The sequence spans 1197 residues: Serine/threonine-protein kinase pakA (1197 aa).

Disordered stretches follow at residues 1 to 96, 328 to 383, 430 to 468, 485 to 543, and 562 to 819; these read MEEK…PIYR, QKED…KNID, REEEEENEDRVERELASRRRQEEDRIKREEEEEEEEQRN, EEEE…NLMG, and NSSG…RVGT. Basic and acidic residues predominate over residues 19–30; it reads QKFEQFLDKTDK. Residues 34–49 show a composition bias toward polar residues; the sequence is ATRNNYRGPVSSSTGI. Positions 51–69 are enriched in basic and acidic residues; that stretch reads NDKEKKSHSYFKVREEGSN. Residues 70-79 show a composition bias toward polar residues; the sequence is KRPSSFSASN. 2 stretches are compositionally biased toward low complexity: residues 80 to 94 and 346 to 381; these read PITPSSPQSTHSSPI and NNNNNENNENDNNNNNNNNNNNNNNNNNNNNNNNKN. The span at 439–458 shows a compositional bias: basic and acidic residues; it reads RVERELASRRRQEEDRIKRE. Over residues 494 to 523 the composition is skewed to low complexity; the sequence is SQLQSSQQQQKSSSTQRSSNTVTSTSSSST. The segment covering 524–536 has biased composition (polar residues); sequence GGDSNPSTSQKPT. Position 585 is a phosphothreonine; by PKB (Thr-585). A compositionally biased stretch (polar residues) spans 593-615; sequence SENTPLVSSIDNNGVNNKMSRSH. Composition is skewed to low complexity over residues 636-653 and 671-707; these read NVNNSNNNNNNNNINNNH and SSSMSTPSISPSQAGNSATSTVPSSPISASTSMSSPT. Residues 718-727 show a composition bias toward polar residues; that stretch reads TTSTGSTRKG. Basic and acidic residues predominate over residues 728-737; that stretch reads SISEREDKKK. The span at 739–756 shows a compositional bias: low complexity; sequence SSSSTSSSSSSNGGLSSS. Residues 757–790 are compositionally biased toward basic and acidic residues; the sequence is GKDHKKDHSSEEKEKEKKSFFNKLFSKEKKDHHS. The CRIB domain maps to 817-830; sequence VGTPFNVKHDVHVN. One can recognise a Protein kinase domain in the interval 911-1164; it reads YYNINKIGEG…SSSLLHHPFL (254 aa). ATP is bound by residues 917 to 925 and Lys-940; that span reads IGEGGAGEV. The active-site Proton acceptor is Asp-1032.

It belongs to the protein kinase superfamily. STE Ser/Thr protein kinase family. STE20 subfamily. Requires Mg(2+) as cofactor. Post-translationally, phosphorylation on Thr-585 results in cAMP-mediated activation and localization to the cytoskeleton. In terms of tissue distribution, colocalizes with myosin II to the cleavage furrow of cells undergoing cytokinesis and the posterior cortex of polarized cells.

The protein localises to the cytoplasm. It localises to the cytosol. It is found in the cytoskeleton. It carries out the reaction L-seryl-[protein] + ATP = O-phospho-L-seryl-[protein] + ADP + H(+). The catalysed reaction is L-threonyl-[protein] + ATP = O-phospho-L-threonyl-[protein] + ADP + H(+). Regulator of the myosin II component of the cytoskeleton: required for regulation of cytokinesis. Functions during chemotaxis, required for maintaining the direction of cell movement, suppressing lateral pseudopod extension, and proper retraction of the posterior of chemotaxing cells. The chain is Serine/threonine-protein kinase pakA (pakA) from Dictyostelium discoideum (Social amoeba).